We begin with the raw amino-acid sequence, 366 residues long: Glycerol-3-phosphate dehydrogenase [NAD(+)], glycosomal (366 aa).

Residues 22 to 27 (GSGAFG), Phe-97, Lys-125, and Ala-157 contribute to the NAD(+) site. Lys-125 is a substrate binding site. Lys-210 functions as the Proton acceptor in the catalytic mechanism. Positions 274, 298, and 300 each coordinate NAD(+). 274–275 (RN) is a substrate binding site. Positions 364–366 (SKL) match the Microbody targeting signal motif.

This sequence belongs to the NAD-dependent glycerol-3-phosphate dehydrogenase family. In terms of assembly, homodimer.

It localises to the glycosome. It carries out the reaction sn-glycerol 3-phosphate + NAD(+) = dihydroxyacetone phosphate + NADH + H(+). The chain is Glycerol-3-phosphate dehydrogenase [NAD(+)], glycosomal (GPD) from Leishmania mexicana.